Consider the following 1036-residue polypeptide: Hexagonally packed intermediate-layer surface protein (1036 aa).

Residues 1–17 form the signal peptide; sequence MKKNIALMALTGVLTLA. Intrachain disulfides connect Cys-74–Cys-86, Cys-256–Cys-275, and Cys-642–Cys-754.

Post-translationally, glycosylated; contains six glycans. In terms of processing, acylated in the N-terminal region. The N-terminus is blocked.

The protein resides in the secreted. Its subcellular location is the cell wall. It localises to the S-layer. Its function is as follows. Shape maintenance, possible protection from noxious enzymes or exogenous and unsettling DNA, and may mediate homotypic cell-cell contacts. In Deinococcus radiodurans, this protein is Hexagonally packed intermediate-layer surface protein (hpi).